We begin with the raw amino-acid sequence, 83 residues long: ATP synthase subunit c (83 aa).

Helical transmembrane passes span 10–30 (IAVALLIGMGALGTAIGFGLL) and 52–72 (MFIVAGLLDAVTMIGVGIALF).

It belongs to the ATPase C chain family. F-type ATPases have 2 components, F(1) - the catalytic core - and F(0) - the membrane proton channel. F(1) has five subunits: alpha(3), beta(3), gamma(1), delta(1), epsilon(1). F(0) has three main subunits: a(1), b(2) and c(10-14). The alpha and beta chains form an alternating ring which encloses part of the gamma chain. F(1) is attached to F(0) by a central stalk formed by the gamma and epsilon chains, while a peripheral stalk is formed by the delta and b chains.

The protein resides in the cell inner membrane. In terms of biological role, f(1)F(0) ATP synthase produces ATP from ADP in the presence of a proton or sodium gradient. F-type ATPases consist of two structural domains, F(1) containing the extramembraneous catalytic core and F(0) containing the membrane proton channel, linked together by a central stalk and a peripheral stalk. During catalysis, ATP synthesis in the catalytic domain of F(1) is coupled via a rotary mechanism of the central stalk subunits to proton translocation. Its function is as follows. Key component of the F(0) channel; it plays a direct role in translocation across the membrane. A homomeric c-ring of between 10-14 subunits forms the central stalk rotor element with the F(1) delta and epsilon subunits. In Shewanella loihica (strain ATCC BAA-1088 / PV-4), this protein is ATP synthase subunit c.